The primary structure comprises 54 residues: Relaxin (54 aa).

Gln1 carries the pyrrolidone carboxylic acid modification. Cystine bridges form between Cys13–Cys41, Cys25–Cys54, and Cys40–Cys45.

The protein belongs to the insulin family. Heterodimer of a B chain and an A chain linked by two disulfide bonds.

The protein localises to the secreted. In terms of biological role, the function of relaxin in an oviparous species is not yet known. The polypeptide is Relaxin (Squalus acanthias (Spiny dogfish)).